Reading from the N-terminus, the 618-residue chain is 1-deoxy-D-xylulose-5-phosphate synthase (618 aa).

Thiamine diphosphate is bound by residues histidine 74 and 115–117 (GHS). A Mg(2+)-binding site is contributed by aspartate 146. Residues 147 to 148 (GA), asparagine 175, tyrosine 286, and glutamate 366 each bind thiamine diphosphate. Mg(2+) is bound at residue asparagine 175.

This sequence belongs to the transketolase family. DXPS subfamily. Homodimer. Requires Mg(2+) as cofactor. The cofactor is thiamine diphosphate.

The catalysed reaction is D-glyceraldehyde 3-phosphate + pyruvate + H(+) = 1-deoxy-D-xylulose 5-phosphate + CO2. It functions in the pathway metabolic intermediate biosynthesis; 1-deoxy-D-xylulose 5-phosphate biosynthesis; 1-deoxy-D-xylulose 5-phosphate from D-glyceraldehyde 3-phosphate and pyruvate: step 1/1. Its function is as follows. Catalyzes the acyloin condensation reaction between C atoms 2 and 3 of pyruvate and glyceraldehyde 3-phosphate to yield 1-deoxy-D-xylulose-5-phosphate (DXP). The sequence is that of 1-deoxy-D-xylulose-5-phosphate synthase from Clostridium tetani (strain Massachusetts / E88).